The chain runs to 706 residues: ATP-dependent DNA helicase HMI1, mitochondrial (706 aa).

Positions 5–277 (TPSQWKVINK…LKLFDNFRST (273 aa)) constitute a UvrD-like helicase ATP-binding domain. Residues 29 to 34 (GSGKTL) and Arg-275 each bind ATP. The region spanning 278–593 (PEIISLASKI…KLSTIHSAKG (316 aa)) is the UvrD-like helicase C-terminal domain. Positions 693–706 (YSSLRGCKSVFRRI) are cleaved as a propeptide — cleaved upon import into mitochondrion.

Belongs to the helicase family. UvrD subfamily. It depends on Mg(2+) as a cofactor.

Its subcellular location is the mitochondrion inner membrane. The enzyme catalyses Couples ATP hydrolysis with the unwinding of duplex DNA by translocating in the 3'-5' direction.. It catalyses the reaction ATP + H2O = ADP + phosphate + H(+). In terms of biological role, required for mitochondrial genome maintenance and mitochondrial DNA inheritance. This Saccharomyces cerevisiae (strain ATCC 204508 / S288c) (Baker's yeast) protein is ATP-dependent DNA helicase HMI1, mitochondrial (HMI1).